Here is a 679-residue protein sequence, read N- to C-terminus: Methionine--tRNA ligase (679 aa).

Residues 14 to 24 carry the 'HIGH' region motif; the sequence is PYANGSIHLGH. Zn(2+) is bound by residues cysteine 145, cysteine 148, cysteine 158, and cysteine 161. The 'KMSKS' region motif lies at 331–335; the sequence is KMSKS. Lysine 334 serves as a coordination point for ATP. In terms of domain architecture, tRNA-binding spans 577–679; the sequence is TFAAVDLRVA…SGAKPGQRIK (103 aa).

The protein belongs to the class-I aminoacyl-tRNA synthetase family. MetG type 1 subfamily. Homodimer. Requires Zn(2+) as cofactor.

It is found in the cytoplasm. The enzyme catalyses tRNA(Met) + L-methionine + ATP = L-methionyl-tRNA(Met) + AMP + diphosphate. In terms of biological role, is required not only for elongation of protein synthesis but also for the initiation of all mRNA translation through initiator tRNA(fMet) aminoacylation. The chain is Methionine--tRNA ligase from Pseudomonas putida (strain GB-1).